A 505-amino-acid polypeptide reads, in one-letter code: RNA-splicing ligase RtcB homolog (505 aa).

Mn(2+)-binding residues include Asp-119, Cys-122, His-227, and His-259. Position 226-230 (226-230) interacts with GMP; it reads NHYAE. Ser-300 is subject to Phosphoserine. His-353 lines the Mn(2+) pocket. GMP is bound by residues 353 to 354, 402 to 405, Ser-409, and 428 to 431; these read HN, GGTM, and HGAG. His-428 serves as the catalytic GMP-histidine intermediate. Lys-496 is covalently cross-linked (Glycyl lysine isopeptide (Lys-Gly) (interchain with G-Cter in SUMO2)). Residue Lys-504 coordinates GMP.

It belongs to the RtcB family. Catalytic component of the tRNA-splicing ligase complex. Mn(2+) serves as cofactor.

The protein resides in the nucleus. It localises to the cytoplasm. It catalyses the reaction a 3'-end 3'-phospho-ribonucleotide-RNA + a 5'-end dephospho-ribonucleoside-RNA + GTP = a ribonucleotidyl-ribonucleotide-RNA + GMP + diphosphate. The enzyme catalyses a 3'-end 2',3'-cyclophospho-ribonucleotide-RNA + a 5'-end dephospho-ribonucleoside-RNA + GTP + H2O = a ribonucleotidyl-ribonucleotide-RNA + GMP + diphosphate + H(+). Functionally, catalytic subunit of the tRNA-splicing ligase complex that acts by directly joining spliced tRNA halves to mature-sized tRNAs by incorporating the precursor-derived splice junction phosphate into the mature tRNA as a canonical 3',5'-phosphodiester. May act as an RNA ligase with broad substrate specificity, and may function toward other RNAs. The polypeptide is RNA-splicing ligase RtcB homolog (Bos taurus (Bovine)).